The primary structure comprises 96 residues: Co-chaperonin GroES (96 aa).

Belongs to the GroES chaperonin family. In terms of assembly, heptamer of 7 subunits arranged in a ring. Interacts with the chaperonin GroEL.

It localises to the cytoplasm. Functionally, together with the chaperonin GroEL, plays an essential role in assisting protein folding. The GroEL-GroES system forms a nano-cage that allows encapsulation of the non-native substrate proteins and provides a physical environment optimized to promote and accelerate protein folding. GroES binds to the apical surface of the GroEL ring, thereby capping the opening of the GroEL channel. The protein is Co-chaperonin GroES of Methylobacterium radiotolerans (strain ATCC 27329 / DSM 1819 / JCM 2831 / NBRC 15690 / NCIMB 10815 / 0-1).